A 776-amino-acid polypeptide reads, in one-letter code: Protein SEY1 (776 aa).

The Cytoplasmic portion of the chain corresponds to 1-681; the sequence is MADRPAIQLI…KRSIITTRTH (681 aa). The GB1/RHD3-type G domain occupies 34 to 263; that stretch reads GLDYHVISVF…TENYYFKPQY (230 aa). 44–51 contacts GTP; the sequence is GSQSSGKS. A helical transmembrane segment spans residues 682 to 702; the sequence is IPPWIYVLLAVLGWNEFVAVI. At 703–705 the chain is on the lumenal side; it reads RNP. The helical transmembrane segment at 706–726 threads the bilayer; the sequence is LFVTLTLILGATFFVIHKFGL. Residues 727–776 are Cytoplasmic-facing; it reads WGPVVNVVQSAVGETRTAIKDKLRQFVVEDHEVKESFEMKDFSKNEQKEK.

The protein belongs to the TRAFAC class dynamin-like GTPase superfamily. GB1/RHD3 GTPase family. RHD3 subfamily. Interacts with RTN1 and YOP1; GTP binding is not required for these interactions.

It is found in the endoplasmic reticulum membrane. Cooperates with the reticulon proteins RTN1 and RTN2 and the tubule-shaping DP1 family protein YOP1 to generate and maintain the structure of the tubular endoplasmic reticulum network. Has GTPase activity, which is required for its function in ER organization. In Saccharomyces cerevisiae (strain ATCC 204508 / S288c) (Baker's yeast), this protein is Protein SEY1.